Here is a 263-residue protein sequence, read N- to C-terminus: MWELRSASFWRAIFAEFFATLFYVFFGLGASLRWAPGPLHVLQVALAFGLALATLVQTVGHISGAHVNPAVTFAFLVGSQMSLLRAFCYIAAQLLGAVAGAAVLYSVTPPAVRGNLALNTLHAGVSVGQATTVEIFLTLQFVLCIFATYDERRNGRMGSVALAVGFSLTLGHLFGMYYTGAGMNPARSFAPAILTRNFSNHWVYWVGPIIGGGLGSLLYDFLLFPRLKSVSERLSILKGARPSDSNGQPEGTGEPVELKTQAL.

The Cytoplasmic segment spans residues 1 to 9 (MWELRSASF). A helical membrane pass occupies residues 10–29 (WRAIFAEFFATLFYVFFGLG). Topologically, residues 30 to 41 (ASLRWAPGPLHV) are extracellular. The helical transmembrane segment at 42-59 (LQVALAFGLALATLVQTV) threads the bilayer. At 60–61 (GH) the chain is on the cytoplasmic side. Positions 62–77 (ISGAHVNPAVTFAFLV) form an intramembrane region, discontinuously helical. The short motif at 68–70 (NPA) is the NPA 1 element. Residues 78 to 82 (GSQMS) are Cytoplasmic-facing. The chain crosses the membrane as a helical span at residues 83–106 (LLRAFCYIAAQLLGAVAGAAVLYS). The Extracellular segment spans residues 107 to 127 (VTPPAVRGNLALNTLHAGVSV). A helical transmembrane segment spans residues 128–148 (GQATTVEIFLTLQFVLCIFAT). Residues 149-156 (YDERRNGR) lie on the Cytoplasmic side of the membrane. A helical membrane pass occupies residues 157-175 (MGSVALAVGFSLTLGHLFG). Residues 176-178 (MYY) lie on the Extracellular side of the membrane. The discontinuously helical intramembrane region spans 179–193 (TGAGMNPARSFAPAI). The NPA 2 signature appears at 184-186 (NPA). Topologically, residues 194–200 (LTRNFSN) are extracellular. A helical membrane pass occupies residues 201 to 222 (HWVYWVGPIIGGGLGSLLYDFL). The Cytoplasmic segment spans residues 223–263 (LFPRLKSVSERLSILKGARPSDSNGQPEGTGEPVELKTQAL). The tract at residues 227-237 (LKSVSERLSIL) is interaction with CALM. Phosphoserine occurs at positions 235, 243, and 245. The segment at 240 to 263 (ARPSDSNGQPEGTGEPVELKTQAL) is disordered. Asparagine 246 is subject to Deamidated asparagine.

This sequence belongs to the MIP/aquaporin (TC 1.A.8) family. In terms of assembly, homotetramer; each monomer provides an independent water pore. Two homotetramers on opposing membranes can dimerize, forming a cell-cell junction. Interacts with CALM; the calcium-calmodulin/CALM complex interacts with the cytoplasmic domains of two aquaporins, leading to channel closure. Interacts with BFSP1 (via C-terminus); prevents calcium-dependent inhibition of the water channel activity. In terms of processing, subject to partial proteolytic cleavage in the eye lens core. Partial proteolysis promotes interactions between tetramers from adjoining membranes. Post-translationally, fatty acylated at Met-1 and Lys-238. The acyl modifications, in decreasing order of ion abundance, are: oleoyl (C18:1) &gt; palmitoyl (C16:0) &gt; stearoyl (C18:0) &gt; eicosenoyl (C20:1) &gt; dihomo-gamma-linolenoyl (C20:3) &gt; palmitoleoyl (C16:1) &gt; eicosadienoyl (C20:2).

The protein resides in the cell membrane. It localises to the cell junction. The catalysed reaction is H2O(in) = H2O(out). The water channel activity is inhibited by calcium through calmodulin/CALM. Functionally, aquaporins form homotetrameric transmembrane channels, with each monomer independently mediating water transport across the plasma membrane along its osmotic gradient. Specifically expressed in lens fiber cells, this aquaporin is crucial for maintaining lens water homeostasis and transparency. Beyond water permeability, it also acts as a cell-to-cell adhesion molecule, forming thin junctions between lens fiber cells that are essential for maintaining the ordered structure and transparency of the lens. This Mus musculus (Mouse) protein is Lens fiber major intrinsic protein.